Here is a 31-residue protein sequence, read N- to C-terminus: Bacteriocin lactocin-705 (31 aa).

Functionally, antibacterial activity against several lactic acid bacteria, Listeria, Streptococci, etc. The chain is Bacteriocin lactocin-705 from Lacticaseibacillus paracasei (Lactobacillus paracasei).